A 239-amino-acid polypeptide reads, in one-letter code: 1-(5-phosphoribosyl)-5-[(5-phosphoribosylamino)methylideneamino] imidazole-4-carboxamide isomerase (239 aa).

Aspartate 8 acts as the Proton acceptor in catalysis. The active-site Proton donor is aspartate 129.

It belongs to the HisA/HisF family.

The protein resides in the cytoplasm. The catalysed reaction is 1-(5-phospho-beta-D-ribosyl)-5-[(5-phospho-beta-D-ribosylamino)methylideneamino]imidazole-4-carboxamide = 5-[(5-phospho-1-deoxy-D-ribulos-1-ylimino)methylamino]-1-(5-phospho-beta-D-ribosyl)imidazole-4-carboxamide. Its pathway is amino-acid biosynthesis; L-histidine biosynthesis; L-histidine from 5-phospho-alpha-D-ribose 1-diphosphate: step 4/9. This chain is 1-(5-phosphoribosyl)-5-[(5-phosphoribosylamino)methylideneamino] imidazole-4-carboxamide isomerase, found in Paramagnetospirillum magneticum (strain ATCC 700264 / AMB-1) (Magnetospirillum magneticum).